The following is a 60-amino-acid chain: Large ribosomal subunit protein bL32 (60 aa).

The disordered stretch occupies residues 1–47 (MAVQQNRKTRSKRGMRRSHDALTSSTLSTDPTTGEKHRRHHVTADGF). Residues 7–16 (RKTRSKRGMR) show a composition bias toward basic residues.

The protein belongs to the bacterial ribosomal protein bL32 family.

The polypeptide is Large ribosomal subunit protein bL32 (Teredinibacter turnerae (strain ATCC 39867 / T7901)).